Here is a 178-residue protein sequence, read N- to C-terminus: Signal peptidase complex subunit 2 (178 aa).

Over 1-37 (MSSAKPINVYSIPELNQALDEALPSVFARLNYERSYA) the chain is Cytoplasmic. Residues 38-58 (LLDAKLYIGYSIAVVAGLSFF) traverse the membrane as a helical segment. The Lumenal portion of the chain corresponds to 59–67 (LDKKFERDQ). A helical transmembrane segment spans residues 68–88 (IVTYQKLLVGAYFVLSLLFWY). Over 89–178 (FSRFIEKGTV…HNVLDTKKNE (90 aa)) the chain is Cytoplasmic.

The protein belongs to the SPCS2 family. As to quaternary structure, component of the signal peptidase complex (SPC) composed of a catalytic subunit SEC11 and three accessory subunits SPC1, SPC2 and SPC3. The complex induces a local thinning of the ER membrane which is used to measure the length of the signal peptide (SP) h-region of protein substrates. This ensures the selectivity of the complex towards h-regions shorter than 18-20 amino acids. SPC associates with the translocon complex. Interacts with SBH1 and SEB2/SBH2.

It localises to the endoplasmic reticulum membrane. Its function is as follows. Component of the signal peptidase complex (SPC) which catalyzes the cleavage of N-terminal signal sequences from nascent proteins as they are translocated into the lumen of the endoplasmic reticulum. Enhances the enzymatic activity of SPC and facilitates the interactions between different components of the translocation site. The chain is Signal peptidase complex subunit 2 (SPC2) from Saccharomyces cerevisiae (strain ATCC 204508 / S288c) (Baker's yeast).